Consider the following 1287-residue polypeptide: DNA-directed RNA polymerase subunit beta (1287 aa).

It belongs to the RNA polymerase beta chain family. As to quaternary structure, the RNAP catalytic core consists of 2 alpha, 1 beta, 1 beta' and 1 omega subunit. When a sigma factor is associated with the core the holoenzyme is formed, which can initiate transcription.

It catalyses the reaction RNA(n) + a ribonucleoside 5'-triphosphate = RNA(n+1) + diphosphate. Functionally, DNA-dependent RNA polymerase catalyzes the transcription of DNA into RNA using the four ribonucleoside triphosphates as substrates. This Mycoplasma capricolum subsp. capricolum (strain California kid / ATCC 27343 / NCTC 10154) protein is DNA-directed RNA polymerase subunit beta.